The sequence spans 741 residues: Hemolysin (741 aa).

The N-terminal stretch at 1 to 25 is a signal peptide; it reads MPKLNRCAIAIFTILSAISSPTLLA. The propeptide occupies 26-157; it reads NINEPSGEAA…RSGFASPAPA (132 aa). 3 disulfides stabilise this stretch: Cys182/Cys200, Cys497/Cys511, and Cys537/Cys549. The Ricin B-type lectin domain maps to 484–575; the sequence is RPVNLQLASF…LTNVYSGESL (92 aa). The interval 607-741 is beta-prism domain; sequence NAQESSPILG…LVKGVQFDLN (135 aa).

The protein belongs to the HlyA hemolysin family. In terms of assembly, monomer. Homoheptamer. After binding to target membranes the protein assembles into a heptameric pre-pore complex. Proteolytic cleavage triggers a conformation change that is required for membrane insertion and pore formation. Proteolytical cleavage is required to convert the 80 kDa hemolysin precursor into the active 65 kDa hemolysin.

It is found in the secreted. It localises to the host cell membrane. Bacterial hemolysin that causes cytolysis by forming heptameric pores in target host membranes. The polypeptide is Hemolysin (hlyA) (Vibrio cholerae serotype O1 (strain ATCC 39315 / El Tor Inaba N16961)).